We begin with the raw amino-acid sequence, 313 residues long: Protein PHOSPHATE-INDUCED 1 (313 aa).

The first 22 residues, 1 to 22, serve as a signal peptide directing secretion; that stretch reads MATSHFILKLFLVISFCNVCFA. The N-linked (GlcNAc...) asparagine glycan is linked to Asn119.

It belongs to the EXORDIUM family.

Its subcellular location is the secreted. It localises to the extracellular space. The protein localises to the apoplast. Functionally, may be involved in the regulation of cell division. In Nicotiana tabacum (Common tobacco), this protein is Protein PHOSPHATE-INDUCED 1.